A 217-amino-acid polypeptide reads, in one-letter code: Probable chemoreceptor glutamine deamidase CheD (217 aa).

The tract at residues 194–217 is disordered; the sequence is ATSGTAPSRGGELFTRASASRTPS.

This sequence belongs to the CheD family.

The catalysed reaction is L-glutaminyl-[protein] + H2O = L-glutamyl-[protein] + NH4(+). In terms of biological role, probably deamidates glutamine residues to glutamate on methyl-accepting chemotaxis receptors (MCPs), playing an important role in chemotaxis. In Cupriavidus pinatubonensis (strain JMP 134 / LMG 1197) (Cupriavidus necator (strain JMP 134)), this protein is Probable chemoreceptor glutamine deamidase CheD.